Reading from the N-terminus, the 2515-residue chain is Nonribosomal peptide synthetase tpzA (2515 aa).

Residues 246 to 648 (ELATRQPGAQ…GRMGTQVKLR (403 aa)) form an adenylation 1 region. Residues 794-867 (SEVEHLIHAI…DMATVALKTS (74 aa)) form the Carrier 1 domain. Ser828 is modified (O-(pantetheine 4'-phosphoryl)serine). The interval 924–1332 (DAYPCSPLQE…IRSVPHITPE (409 aa)) is condensation 1. Residues 1357-1758 (RKQSQETPSA…GRMNDQIKLR (402 aa)) form an adenylation 2 region. Residues 1900-1976 (LATTNEERTL…AILSHLTGRK (77 aa)) enclose the Carrier 2 domain. Ser1937 is modified (O-(pantetheine 4'-phosphoryl)serine). The condensation 2 stretch occupies residues 2013–2431 (VEDIYPCGPI…LGILPPEEQK (419 aa)). The region spanning 2436 to 2512 (PSLSAAVVRL…AMARRSLVVS (77 aa)) is the Carrier 3 domain. Ser2473 carries the O-(pantetheine 4'-phosphoryl)serine modification.

Belongs to the NRP synthetase family.

It functions in the pathway secondary metabolite biosynthesis. Functionally, nonribosomal peptide synthetase; part of the gene cluster that mediates the biosynthesis of terreazepine,. The first step of terreazepine biosynthesis is catalyzed by the indoleamine 2,3-dioxygenase tpzB which produces N-formyl-kynurenine through the catabolism of tryptophan. The two-module NRPS tpzA then utilizes anthranilate and kynurenine to assemble terreazepine. The first adenylation domain of tpzA (A1) loads anthranilate onto the T1 domain, while A2 loads kynurenine, generated through spontaneous nonenzymatic deformylation of the tzpB-supplied N-formyl-kynurenine. TpzA produces a 2:1 mixture of S-R enantiomers, which suggests that the A2 domain accepts both D- and L-kynurenine. The peptide bond formation between the tethered amino acids is catalyzed by the first condensation domain (C1) between anthranilate's carbonyl carbon and kynurenine's aliphatic primary amine. The second C domain (C2) catalyzes the final cyclization event between the aromatic amine of kynurenine and the tethered carbonyl carbon, yielding the final terreazepine product. The T3 domain may facilitate the interaction with downstream tailoring enzymes. This is Nonribosomal peptide synthetase tpzA from Aspergillus terreus (strain NIH 2624 / FGSC A1156).